The primary structure comprises 302 residues: Flavin-dependent thymidylate synthase (302 aa).

The ThyX domain maps to 43-257 (GFVRVIDYMG…PFAYKAFEDY (215 aa)). FAD-binding positions include T89, 112 to 114 (RHR), and E120. Residues 109 to 112 (QWIR), 120 to 124 (EYSAR), and R196 contribute to the dUMP site. The short motif at 112-122 (RHRTANVNEYS) is the ThyX motif element. FAD contacts are provided by residues 212 to 214 (DLH) and H218. R223 contributes to the dUMP binding site. The active-site Involved in ionization of N3 of dUMP, leading to its activation is R223.

The protein belongs to the thymidylate synthase ThyX family. As to quaternary structure, homotetramer. FAD serves as cofactor.

It carries out the reaction dUMP + (6R)-5,10-methylene-5,6,7,8-tetrahydrofolate + NADPH + H(+) = dTMP + (6S)-5,6,7,8-tetrahydrofolate + NADP(+). The protein operates within pyrimidine metabolism; dTTP biosynthesis. Its function is as follows. Catalyzes the reductive methylation of 2'-deoxyuridine-5'-monophosphate (dUMP) to 2'-deoxythymidine-5'-monophosphate (dTMP) while utilizing 5,10-methylenetetrahydrofolate (mTHF) as the methyl donor, and NADPH and FADH(2) as the reductant. The chain is Flavin-dependent thymidylate synthase from Ruegeria pomeroyi (strain ATCC 700808 / DSM 15171 / DSS-3) (Silicibacter pomeroyi).